The chain runs to 160 residues: NADH-quinone oxidoreductase subunit B (160 aa).

Residues cysteine 39, cysteine 40, cysteine 104, and cysteine 135 each coordinate [4Fe-4S] cluster.

This sequence belongs to the complex I 20 kDa subunit family. NDH-1 is composed of 14 different subunits. Subunits NuoB, C, D, E, F, and G constitute the peripheral sector of the complex. Requires [4Fe-4S] cluster as cofactor.

It localises to the cell membrane. It carries out the reaction a quinone + NADH + 5 H(+)(in) = a quinol + NAD(+) + 4 H(+)(out). In terms of biological role, NDH-1 shuttles electrons from NADH, via FMN and iron-sulfur (Fe-S) centers, to quinones in the respiratory chain. The immediate electron acceptor for the enzyme in this species is believed to be a menaquinone. Couples the redox reaction to proton translocation (for every two electrons transferred, four hydrogen ions are translocated across the cytoplasmic membrane), and thus conserves the redox energy in a proton gradient. The polypeptide is NADH-quinone oxidoreductase subunit B (Amoebophilus asiaticus (strain 5a2)).